A 478-amino-acid polypeptide reads, in one-letter code: Isoeugenol monooxygenase (478 aa).

Fe cation contacts are provided by His167, His218, His282, and His471.

The protein belongs to the carotenoid oxygenase family. Requires Fe(2+) as cofactor.

The catalysed reaction is (E)-isoeugenol + O2 = vanillin + acetaldehyde. Inhibited by Co(2+), Ni(2+) and Zn(2+), which may inhibit enzyme activity by replacing iron in the catalytic residues. Inhibited by incubation with high concentrations of the iron chelators 1,10-phenanthroline and Tiron. However, iron is not completely removed by the chelators, suggesting that iron is tightly bound to the enzyme. Functionally, involved in isoeugenol degradation. Catalyzes the oxidative cleavage of the side chain double-bond of isoeugenol to form vanillin and acetaldehyde. This chain is Isoeugenol monooxygenase, found in Pseudomonas nitroreducens.